An 87-amino-acid polypeptide reads, in one-letter code: UPF0147 protein AF_2370.1 (87 aa).

It belongs to the UPF0147 family.

The chain is UPF0147 protein AF_2370.1 from Archaeoglobus fulgidus (strain ATCC 49558 / DSM 4304 / JCM 9628 / NBRC 100126 / VC-16).